The primary structure comprises 668 residues: UvrABC system protein B (668 aa).

Positions 25 to 414 (RGLHAGARFQ…IVEQLIRPTG (390 aa)) constitute a Helicase ATP-binding domain. 38–45 (GVTGSGKT) contacts ATP. The short motif at 91 to 114 (YYDYYQPESYVPARDLYIEKDASI) is the Beta-hairpin element. One can recognise a Helicase C-terminal domain in the interval 431–594 (DICQRVKACS…TIKKSIEDIL (164 aa)). A UVR domain is found at 627–662 (KKMVQALRLHMKVCARELRFEEAALIRDKILQLQRQ).

It belongs to the UvrB family. Forms a heterotetramer with UvrA during the search for lesions. Interacts with UvrC in an incision complex.

Its subcellular location is the cytoplasm. The UvrABC repair system catalyzes the recognition and processing of DNA lesions. A damage recognition complex composed of 2 UvrA and 2 UvrB subunits scans DNA for abnormalities. Upon binding of the UvrA(2)B(2) complex to a putative damaged site, the DNA wraps around one UvrB monomer. DNA wrap is dependent on ATP binding by UvrB and probably causes local melting of the DNA helix, facilitating insertion of UvrB beta-hairpin between the DNA strands. Then UvrB probes one DNA strand for the presence of a lesion. If a lesion is found the UvrA subunits dissociate and the UvrB-DNA preincision complex is formed. This complex is subsequently bound by UvrC and the second UvrB is released. If no lesion is found, the DNA wraps around the other UvrB subunit that will check the other stand for damage. The sequence is that of UvrABC system protein B from Treponema pallidum (strain Nichols).